Here is a 265-residue protein sequence, read N- to C-terminus: Urease accessory protein UreH (265 aa).

This sequence belongs to the UreD family. As to quaternary structure, ureH, UreF and UreG form a complex that acts as a GTP-hydrolysis-dependent molecular chaperone, activating the urease apoprotein by helping to assemble the nickel containing metallocenter of UreC. The UreE protein probably delivers the nickel.

It is found in the cytoplasm. In terms of biological role, required for maturation of urease via the functional incorporation of the urease nickel metallocenter. This Helicobacter pylori (strain HPAG1) protein is Urease accessory protein UreH.